A 251-amino-acid chain; its full sequence is Cell division protein ZapD (251 aa).

The protein belongs to the ZapD family. In terms of assembly, interacts with FtsZ.

It is found in the cytoplasm. In terms of biological role, cell division factor that enhances FtsZ-ring assembly. Directly interacts with FtsZ and promotes bundling of FtsZ protofilaments, with a reduction in FtsZ GTPase activity. The protein is Cell division protein ZapD of Burkholderia thailandensis (strain ATCC 700388 / DSM 13276 / CCUG 48851 / CIP 106301 / E264).